A 502-amino-acid polypeptide reads, in one-letter code: Uric acid degradation bifunctional protein (502 aa).

Residues 1–178 (MMRLKQLNEM…NSMTKHKERV (178 aa)) form an OHCU decarboxylase region. The active-site Proton donor; for OHCU decarboxylase activity is histidine 68. 5-hydroxy-2-oxo-4-ureido-2,5-dihydro-1H-imidazole-5-carboxylate-binding positions include proline 69, 81 to 85 (SQEEQ), and 116 to 120 (FVMAV). The urate oxidase stretch occupies residues 179-502 (MYYGKGDVFA…DEPDHKGALK (324 aa)). Lysine 183 (charge relay system; for urate oxidase activity) is an active-site residue. The active-site Charge relay system is lysine 194. The Charge relay system; for urate oxidase activity role is filled by threonine 243. Urate is bound by residues threonine 243, aspartate 244, phenylalanine 354, arginine 371, isoleucine 419, glutamine 420, and asparagine 446.

In the N-terminal section; belongs to the OHCU decarboxylase family. It in the C-terminal section; belongs to the uricase family.

It carries out the reaction 5-hydroxy-2-oxo-4-ureido-2,5-dihydro-1H-imidazole-5-carboxylate + H(+) = (S)-allantoin + CO2. It catalyses the reaction urate + O2 + H2O = 5-hydroxyisourate + H2O2. It functions in the pathway purine metabolism; urate degradation; (S)-allantoin from urate: step 1/3. Its pathway is purine metabolism; urate degradation; (S)-allantoin from urate: step 3/3. Its function is as follows. Catalyzes two steps in the degradation of uric acid, i.e. the oxidation of uric acid to 5-hydroxyisourate (HIU) and the stereoselective decarboxylation of 2-oxo-4-hydroxy-4-carboxy-5-ureidoimidazoline (OHCU) to (S)-allantoin. This chain is Uric acid degradation bifunctional protein (uao), found in Bacillus sp. (strain TB-90).